The following is a 975-amino-acid chain: MSQTPSSLRDLEHHSAFVERHIGPNDAEIAQMLGVVGHDSLDAMTDAIVPSNIKSPAALALPDAITEEEALARIRAIASKNQVQRTFIGQGYYGTHTPKVILRNILENPAWYTAYTPYQAEISQGRMEALINFQTMCADLTGMQIANASLLDEATAAAEAMTLAKRSAKSKSDTFFVHDAVHPQTQELLRTRAEPLGIVLRVGTPDEAMQAECFGVLLQYPDSFGHIGDHAALADAVHAQGGLVAVATDLLALTLIAAPGEWGADIVVGNSQRFGVPFGFGGPHAAFMACRDAYKRSMPGRLIGVSIDAAGNPAYRLTLQTREQHIRREKATSNICTAQVLLAVMASMYAVYHGPEGLTRIARRTHRLAAILAAALRSAGVTVGEHFFDTLHVKAIDADAIHAKAHAAGINLRAIDSEAVGISLDETSTRADVVALAQLFGAQADIDALDAATADALPQGMRRTSAFLQHPVFNTHHSEHELLRYMRSLADKDLAMDRTMIPLGSCTMKLNATAEMIPVTWPEFGAIHPLAPPEQSAGYAQLIEELEAMLVECTGYDAVSLQPNSGAQGEYAGLLAIRAYHRSRNEAHRDICLIPESAHGTNPASAQMCGMTVVVTKCDANGNVDVDDIRAKAEKYSDRLAALMITYPSTHGVFEEDVVAICEAVHAHGGQVYTDGANMNALVGVAKPGKWGSDVSHLNLHKTFCIPHGGGGPGVGPCAVKSHLAPFLPKTLPNAGIRAGENQKAAIHGSGSNFGEGEVGMVSAASYGSASILPISWMYVTMMGSAGLRKATQVALLNANYIAKRLSAHYKTLYTGRNGLVAHECILDVRPLEKTSGIGAEDIAKRLIDFGFHAPTLSFPVAGTLMVEPTESESQHELDRFIDAMIQIREEIRAIEDGRLDREDNPLKHAPHTATQVSASEWTHAYPRELAAFPLPSLKQQKYWPPVGRVDNVYGDKNVMCACIPVDAYKDDVVA.

An N6-(pyridoxal phosphate)lysine modification is found at K702.

The protein belongs to the GcvP family. In terms of assembly, the glycine cleavage system is composed of four proteins: P, T, L and H. The cofactor is pyridoxal 5'-phosphate.

It catalyses the reaction N(6)-[(R)-lipoyl]-L-lysyl-[glycine-cleavage complex H protein] + glycine + H(+) = N(6)-[(R)-S(8)-aminomethyldihydrolipoyl]-L-lysyl-[glycine-cleavage complex H protein] + CO2. The glycine cleavage system catalyzes the degradation of glycine. The P protein binds the alpha-amino group of glycine through its pyridoxal phosphate cofactor; CO(2) is released and the remaining methylamine moiety is then transferred to the lipoamide cofactor of the H protein. This is Glycine dehydrogenase (decarboxylating) from Xanthomonas campestris pv. campestris (strain 8004).